We begin with the raw amino-acid sequence, 407 residues long: Phosphopentomutase (407 aa).

6 residues coordinate Mn(2+): Asp10, Asp306, His311, Asp347, His348, and His359.

It belongs to the phosphopentomutase family. Requires Mn(2+) as cofactor.

It localises to the cytoplasm. The enzyme catalyses 2-deoxy-alpha-D-ribose 1-phosphate = 2-deoxy-D-ribose 5-phosphate. It carries out the reaction alpha-D-ribose 1-phosphate = D-ribose 5-phosphate. Its pathway is carbohydrate degradation; 2-deoxy-D-ribose 1-phosphate degradation; D-glyceraldehyde 3-phosphate and acetaldehyde from 2-deoxy-alpha-D-ribose 1-phosphate: step 1/2. Functionally, isomerase that catalyzes the conversion of deoxy-ribose 1-phosphate (dRib-1-P) and ribose 1-phosphate (Rib-1-P) to deoxy-ribose 5-phosphate (dRib-5-P) and ribose 5-phosphate (Rib-5-P), respectively. The sequence is that of Phosphopentomutase from Salmonella dublin (strain CT_02021853).